Consider the following 316-residue polypeptide: Probable cell division protein WhiA (316 aa).

The segment at residues 275-309 (TLKELGEMVSGGKISKSGINHRLRKIDEIAEKLRA) is a DNA-binding region (H-T-H motif).

Belongs to the WhiA family.

Its function is as follows. Involved in cell division and chromosome segregation. This is Probable cell division protein WhiA from Bacillus cereus (strain B4264).